The following is a 369-amino-acid chain: Peptide chain release factor subunit 1 (369 aa).

Belongs to the eukaryotic release factor 1 family. Heterodimer of two subunits, one of which binds GTP.

It localises to the cytoplasm. In terms of biological role, directs the termination of nascent peptide synthesis (translation) in response to the termination codons UAA, UAG and UGA. This Saccharolobus solfataricus (strain ATCC 35092 / DSM 1617 / JCM 11322 / P2) (Sulfolobus solfataricus) protein is Peptide chain release factor subunit 1 (prf1).